A 678-amino-acid polypeptide reads, in one-letter code: Glycine--tRNA ligase beta subunit (678 aa).

It belongs to the class-II aminoacyl-tRNA synthetase family. As to quaternary structure, tetramer of two alpha and two beta subunits.

The protein resides in the cytoplasm. The enzyme catalyses tRNA(Gly) + glycine + ATP = glycyl-tRNA(Gly) + AMP + diphosphate. The protein is Glycine--tRNA ligase beta subunit of Streptococcus pneumoniae (strain Taiwan19F-14).